A 199-amino-acid chain; its full sequence is TATA-box-binding protein (199 aa).

2 repeat units span residues 10 to 86 (IENI…VKLL) and 101 to 177 (IQNI…YNQL).

The protein belongs to the TBP family.

In terms of biological role, general factor that plays a role in the activation of archaeal genes transcribed by RNA polymerase. Binds specifically to the TATA box promoter element which lies close to the position of transcription initiation. This is TATA-box-binding protein from Pyrobaculum calidifontis (strain DSM 21063 / JCM 11548 / VA1).